Here is a 154-residue protein sequence, read N- to C-terminus: CASP-like protein 5B3 (154 aa).

At 1-17 the chain is on the cytoplasmic side; sequence MKDVVGSPGTWSGMSLR. The helical transmembrane segment at 18–38 threads the bilayer; that stretch reads VSQCVFAGASVVAMASAYGFS. A glycan (N-linked (GlcNAc...) asparagine) is linked at asparagine 39. Residues 39–42 are Extracellular-facing; sequence NYTA. A helical membrane pass occupies residues 43–63; that stretch reads FCYLIASMGLQLLWSFGLACL. The Cytoplasmic segment spans residues 64–77; that stretch reads DIYSLQTKRDLHNP. The helical transmembrane segment at 78 to 98 threads the bilayer; that stretch reads VLVSLFVVGDWVTAILSFAAA. Over 99-129 the chain is Extracellular; that stretch reads SASAGVTILFERDVHFCRMYPQLSCGRYELS. A helical membrane pass occupies residues 130 to 150; sequence VILAFITWSFIATSAVSMFWL. The Cytoplasmic portion of the chain corresponds to 151–154; it reads LASL.

This sequence belongs to the Casparian strip membrane proteins (CASP) family. As to quaternary structure, homodimer and heterodimers.

The protein localises to the cell membrane. The sequence is that of CASP-like protein 5B3 from Oryza sativa subsp. indica (Rice).